A 378-amino-acid polypeptide reads, in one-letter code: C-C chemokine receptor type 7 (378 aa).

The signal sequence occupies residues Met1–Cys24. Over Gln25–Trp59 the chain is Extracellular. Residue Asn36 is glycosylated (N-linked (GlcNAc...) asparagine). The helical transmembrane segment at Phe60 to Phe86 threads the bilayer. Residues Lys87–Thr95 lie on the Cytoplasmic side of the membrane. Residues Tyr96–Tyr116 form a helical membrane-spanning segment. The Extracellular segment spans residues Ser117–Lys130. A disulfide bridge connects residues Cys129 and Cys210. Residues Leu131–Ile152 traverse the membrane as a helical segment. Residues Asp153–Arg170 lie on the Cytoplasmic side of the membrane. A helical transmembrane segment spans residues Val171 to Ile191. Over Pro192 to Ala219 the chain is Extracellular. A helical transmembrane segment spans residues Phe220–Ile247. The Cytoplasmic segment spans residues Arg248–Lys263. A helical transmembrane segment spans residues Val264–Ala289. At Asn290–Ser313 the chain is on the extracellular side. The chain crosses the membrane as a helical span at residues Leu314–Val331. Residues Lys332 to Pro378 lie on the Cytoplasmic side of the membrane.

The protein belongs to the G-protein coupled receptor 1 family. As to expression, expressed in various lymphoid tissues and activated B- and T-lymphocytes, strongly up-regulated in B-cells infected with Epstein-Barr virus and T-cells infected with herpesvirus 6 or 7.

The protein localises to the cell membrane. Its function is as follows. Receptor for the MIP-3-beta chemokine. Probable mediator of EBV effects on B-lymphocytes or of normal lymphocyte functions. The chain is C-C chemokine receptor type 7 (CCR7) from Homo sapiens (Human).